Reading from the N-terminus, the 211-residue chain is Putative F-box protein At1g52490 (211 aa).

The 48-residue stretch at E12–V59 folds into the F-box domain.

In Arabidopsis thaliana (Mouse-ear cress), this protein is Putative F-box protein At1g52490.